Reading from the N-terminus, the 275-residue chain is Large ribosomal subunit protein uL2 (275 aa).

The segment at Arg-221–Ala-275 is disordered. Residues Pro-227–Ala-239 are compositionally biased toward basic and acidic residues. The segment covering Leu-254–Lys-263 has biased composition (basic residues). Residues Ser-264–Ala-275 are compositionally biased toward basic and acidic residues.

This sequence belongs to the universal ribosomal protein uL2 family. In terms of assembly, part of the 50S ribosomal subunit. Forms a bridge to the 30S subunit in the 70S ribosome.

Functionally, one of the primary rRNA binding proteins. Required for association of the 30S and 50S subunits to form the 70S ribosome, for tRNA binding and peptide bond formation. It has been suggested to have peptidyltransferase activity; this is somewhat controversial. Makes several contacts with the 16S rRNA in the 70S ribosome. The sequence is that of Large ribosomal subunit protein uL2 from Thermomicrobium roseum (strain ATCC 27502 / DSM 5159 / P-2).